Consider the following 887-residue polypeptide: Beta-galactosidase 14 (887 aa).

The first 31 residues, 1 to 31 (MSKSSRIRMKSRTRYLIAILLVISLCSKASS), serve as a signal peptide directing secretion. Glu-197 (proton donor) is an active-site residue. The Nucleophile role is filled by Glu-268. N-linked (GlcNAc...) asparagine glycans are attached at residues Asn-269, Asn-300, Asn-395, and Asn-785. The 87-residue stretch at 752 to 838 (KDMRLKAVMR…KTLAVQVKCE (87 aa)) folds into the SUEL-type lectin domain. Residues 838–852 (EKKEGKQDEKKKKED) show a composition bias toward basic and acidic residues. Positions 838 to 887 (EKKEGKQDEKKKKEDKDEEEEDDEDDDEEEEEEDKENKDTKDMENKNQDM) are disordered. Residues 853 to 871 (KDEEEEDDEDDDEEEEEED) are compositionally biased toward acidic residues. The span at 872–887 (KENKDTKDMENKNQDM) shows a compositional bias: basic and acidic residues.

It belongs to the glycosyl hydrolase 35 family.

The protein resides in the secreted. Its subcellular location is the extracellular space. It localises to the apoplast. The enzyme catalyses Hydrolysis of terminal non-reducing beta-D-galactose residues in beta-D-galactosides.. The chain is Beta-galactosidase 14 (BGAL14) from Arabidopsis thaliana (Mouse-ear cress).